A 43-amino-acid chain; its full sequence is MAKNINQPVAYPIFTFRWLAIHGLAIPTVFFLGGITAMQFIQR.

Residues 18 to 34 (WLAIHGLAIPTVFFLGG) traverse the membrane as a helical segment. Position 22 (His-22) interacts with heme.

This sequence belongs to the PsbE/PsbF family. Heterodimer of an alpha subunit and a beta subunit. PSII is composed of 1 copy each of membrane proteins PsbA, PsbB, PsbC, PsbD, PsbE, PsbF, PsbH, PsbI, PsbJ, PsbK, PsbL, PsbM, PsbT, PsbX, PsbY, PsbZ, Psb30/Ycf12, at least 3 peripheral proteins of the oxygen-evolving complex and a large number of cofactors. It forms dimeric complexes. Requires heme b as cofactor.

The protein localises to the plastid. The protein resides in the chloroplast thylakoid membrane. Its function is as follows. This b-type cytochrome is tightly associated with the reaction center of photosystem II (PSII). PSII is a light-driven water:plastoquinone oxidoreductase that uses light energy to abstract electrons from H(2)O, generating O(2) and a proton gradient subsequently used for ATP formation. It consists of a core antenna complex that captures photons, and an electron transfer chain that converts photonic excitation into a charge separation. This Phaeodactylum tricornutum (strain CCAP 1055/1) protein is Cytochrome b559 subunit beta.